Reading from the N-terminus, the 1218-residue chain is ABC transporter NFT1 (1218 aa).

Topologically, residues 1 to 29 (MIKNGTCPYWERDDLSECARREYIEFKFP) are extracellular. N4 carries N-linked (GlcNAc...) asparagine glycosylation. The chain crosses the membrane as a helical span at residues 30–50 (LFILLTGMIYAFCKVFRAFYL). Over 51 to 103 (RGKNHTNEAPEFEEQGNGNHEYARFSVLRLKSAWESRSFCNVNNRSTFDKFKK) the chain is Cytoplasmic. Residues 104–124 (FIEGAFIVLQLTIHLYILSSM) traverse the membrane as a helical segment. Over 125–130 (PMDNKK) the chain is Extracellular. Residues 131-151 (FFHQGFLVQMFLWILLLVVIT) form a helical membrane-spanning segment. At 152–169 (LRLISASQSFRWVLACKR) the chain is on the cytoplasmic side. A helical transmembrane segment spans residues 170–190 (DLWAVSFYSYASLFTLSILPL). Residues 191-201 (RSVFIGKIKDK) are Extracellular-facing. A helical transmembrane segment spans residues 202–222 (IMVKYIISETFIDLALLLLLS). Residues 223-302 (TSSIEGTRYS…SSKKGRLLPN (80 aa)) lie on the Cytoplasmic side of the membrane. The chain crosses the membrane as a helical span at residues 303 to 323 (IICYFKAVFISQLFLAFVSSF). The ABC transmembrane type-1 1 domain maps to 311–621 (FISQLFLAFV…IASTVSLLIQ (311 aa)). Residues 324 to 351 (LNFVPSLLMPRILSYVNDPKSKSWNLVS) lie on the Extracellular side of the membrane. A helical membrane pass occupies residues 352 to 374 (LYVSSMLVSKIIATTCRGQGLFL). Over 375–449 (GEKGTMQLRT…VMSIDAFKVS (75 aa)) the chain is Cytoplasmic. The disordered stretch occupies residues 410-434 (NASTSFEENPDSSEAEPRKKSSRKD). The span at 424 to 434 (AEPRKKSSRKD) shows a compositional bias: basic and acidic residues. The helical transmembrane segment at 450-470 (EAMNTFYLACEAVFMTVTALM) threads the bilayer. At 471–481 (ILYSLLGWSAF) the chain is on the extracellular side. Residues 482–504 (AGTFALLAMIPLNFWCATFYGNY) traverse the membrane as a helical segment. The Cytoplasmic portion of the chain corresponds to 505-558 (QADQLILTDKRTSGISEALNSIRVIKLLAWENLFYQKIINVRDGEIRLLKKKAT). Residues 559-579 (IFFLNHLIWFFGPTLVSAITF) form a helical membrane-spanning segment. Residues 580–584 (SVFIK) lie on the Extracellular side of the membrane. The helical transmembrane segment at 585 to 605 (FQNQTLTPTIAFTALSLFAIL) threads the bilayer. The Cytoplasmic portion of the chain corresponds to 606–953 (RTPMDQIAST…KFSAYKWLAD (348 aa)). Positions 651–892 (FGFEDASMEW…NEFLRESINN (242 aa)) constitute an ABC transporter domain. Residue 686 to 693 (GPTGSGKS) coordinates ATP. Positions 892–901 (NDSKNTTHNQ) are enriched in polar residues. The disordered stretch occupies residues 892–926 (NDSKNTTHNQIDLKRSTTSKKTKNGDPEGGNSQDE). A helical membrane pass occupies residues 954-974 (YFGGLGVVFVFTSSSILIHGI). In terms of domain architecture, ABC transmembrane type-1 2 spans 961 to 1218 (VFVFTSSSIL…SSVMIIMKAS (258 aa)). Residues 975-1013 (TLSQGFWLRYWLDTGSSGSKSTWLYRIVEGHSNIYFLLT) are Extracellular-facing. A helical transmembrane segment spans residues 1014–1034 (YIIIGLVSSFLTSGKVWIAII). At 1035-1082 (SGTNVTKKIFAKLLSSILYAKLRFHNVTPTGRIMNRFSKDMDIIDQQL) the chain is on the cytoplasmic side. The chain crosses the membrane as a helical span at residues 1083–1105 (IPNFEGLSYSVVVCLWIILLIGY). Residues 1106–1109 (VTPQ) are Extracellular-facing. Residues 1110-1132 (FLLFAIPLCALYYTVCTLYLRAS) form a helical membrane-spanning segment. Topologically, residues 1133–1197 (RELKRIDNIN…NMATEWITYR (65 aa)) are cytoplasmic. A helical membrane pass occupies residues 1198 to 1218 (VDIIGTLVLFSSSVMIIMKAS).

This sequence belongs to the ABC transporter superfamily. ABCC family. Conjugate transporter (TC 3.A.1.208) subfamily.

It localises to the membrane. The chain is ABC transporter NFT1 (NFT1) from Saccharomyces cerevisiae (strain ATCC 204508 / S288c) (Baker's yeast).